The sequence spans 373 residues: Queuine tRNA-ribosyltransferase (373 aa).

The Proton acceptor role is filled by aspartate 91. Residues 91-95, aspartate 145, glutamine 187, and glycine 214 contribute to the substrate site; that span reads DSGGF. The tract at residues 245–251 is RNA binding; it reads GVGKPED. The Nucleophile role is filled by aspartate 264. An RNA binding; important for wobble base 34 recognition region spans residues 269–273; the sequence is TRNAR. 4 residues coordinate Zn(2+): cysteine 302, cysteine 304, cysteine 307, and histidine 333.

Belongs to the queuine tRNA-ribosyltransferase family. Homodimer. Within each dimer, one monomer is responsible for RNA recognition and catalysis, while the other monomer binds to the replacement base PreQ1. Zn(2+) serves as cofactor.

It carries out the reaction 7-aminomethyl-7-carbaguanine + guanosine(34) in tRNA = 7-aminomethyl-7-carbaguanosine(34) in tRNA + guanine. The protein operates within tRNA modification; tRNA-queuosine biosynthesis. Catalyzes the base-exchange of a guanine (G) residue with the queuine precursor 7-aminomethyl-7-deazaguanine (PreQ1) at position 34 (anticodon wobble position) in tRNAs with GU(N) anticodons (tRNA-Asp, -Asn, -His and -Tyr). Catalysis occurs through a double-displacement mechanism. The nucleophile active site attacks the C1' of nucleotide 34 to detach the guanine base from the RNA, forming a covalent enzyme-RNA intermediate. The proton acceptor active site deprotonates the incoming PreQ1, allowing a nucleophilic attack on the C1' of the ribose to form the product. After dissociation, two additional enzymatic reactions on the tRNA convert PreQ1 to queuine (Q), resulting in the hypermodified nucleoside queuosine (7-(((4,5-cis-dihydroxy-2-cyclopenten-1-yl)amino)methyl)-7-deazaguanosine). The polypeptide is Queuine tRNA-ribosyltransferase (Idiomarina loihiensis (strain ATCC BAA-735 / DSM 15497 / L2-TR)).